Here is a 78-residue protein sequence, read N- to C-terminus: Putative gastrointestinal growth factor xP1 (78 aa).

The signal sequence occupies residues 1–23 (MNYKVFCLVAIALIVGSIGSANG). Positions 30-73 (EQCSVERLARVNCGYSGITPQECTKQGCCFDSTIQDAPWCFYPR) constitute a P-type domain. Cystine bridges form between C32–C58, C42–C57, and C52–C69.

In terms of tissue distribution, stomach mucosa.

It localises to the secreted. May act as a growth factor. This Xenopus laevis (African clawed frog) protein is Putative gastrointestinal growth factor xP1 (p1).